A 148-amino-acid chain; its full sequence is UPF0260 protein Spro_2751 (148 aa).

This sequence belongs to the UPF0260 family.

This is UPF0260 protein Spro_2751 from Serratia proteamaculans (strain 568).